Consider the following 668-residue polypeptide: Fructose-1,6-bisphosphatase class 3 (668 aa).

Belongs to the FBPase class 3 family. Mn(2+) is required as a cofactor.

It catalyses the reaction beta-D-fructose 1,6-bisphosphate + H2O = beta-D-fructose 6-phosphate + phosphate. The protein operates within carbohydrate biosynthesis; gluconeogenesis. The sequence is that of Fructose-1,6-bisphosphatase class 3 from Clostridium botulinum (strain Kyoto / Type A2).